We begin with the raw amino-acid sequence, 284 residues long: Citrate lyase subunit beta-like protein (284 aa).

Substrate contacts are provided by Arg-74 and Glu-129. Mg(2+) is bound by residues Glu-129 and Asp-155.

This sequence belongs to the HpcH/HpaI aldolase family. Citrate lyase beta subunit-like subfamily. Homotrimer. Mg(2+) is required as a cofactor.

Its function is as follows. May play a role in fatty acid biosynthesis. The sequence is that of Citrate lyase subunit beta-like protein from Deinococcus radiodurans (strain ATCC 13939 / DSM 20539 / JCM 16871 / CCUG 27074 / LMG 4051 / NBRC 15346 / NCIMB 9279 / VKM B-1422 / R1).